A 631-amino-acid chain; its full sequence is Cyclic nucleotide-gated channel alpha-3 (631 aa).

Residues 1 to 18 show a composition bias toward polar residues; that stretch reads MAKVNTQCSQPSPTQLSI. 2 disordered regions span residues 1 to 21 and 71 to 98; these read MAKV…IKNA and EVST…RKEE. Over 1–111 the chain is Cytoplasmic; it reads MAKVNTQCSQ…VDPSSNIYYR (111 aa). A compositionally biased stretch (basic and acidic residues) spans 87–98; sequence KPPDGGEGRKEE. The chain crosses the membrane as a helical span at residues 112–133; sequence WLTAIALPVFYNWCLLVCRACF. Topologically, residues 134 to 139 are extracellular; the sequence is DELQSE. The chain crosses the membrane as a helical span at residues 140-160; sequence HLTLWLVLDYSADVLYVLDML. At 161–187 the chain is on the cytoplasmic side; that stretch reads VRARTGFLEQGLMVRDTKRLWKHYTKT. The chain crosses the membrane as a helical span at residues 188–207; that stretch reads LHFKLDILSLIPTDLAYLKL. The Extracellular segment spans residues 208–211; sequence GVNY. A helical transmembrane segment spans residues 212 to 229; that stretch reads PELRFNRLLKFSRLFEFF. At 230 to 239 the chain is on the cytoplasmic side; the sequence is DRTETRTNYP. Residues 239–347 form an ion conduction pathway region; that stretch reads PNVFRIGNLV…GNVGSMISNM (109 aa). A helical transmembrane segment spans residues 240–262; the sequence is NVFRIGNLVLYTLIIIHWNACIY. Residues 263-288 are Extracellular-facing; that stretch reads FAISKFIGFGTDSWVYPNTSKPEYAR. Residue asparagine 280 is glycosylated (N-linked (GalNAc...) asparagine). Helical transmembrane passes span 289–319 and 320–344; these read LSRK…DEEY and LFVV…GSMI. Residues 306 to 309 are selectivity filter; that stretch reads TIGE. Over 345-631 the chain is Cytoplasmic; sequence SNMNAPRVEF…ENSEDASKTD (287 aa). The C-linker stretch occupies residues 349 to 426; the sequence is APRVEFQAKI…TLKKVRIFQD (78 aa). The tract at residues 429–549 is cyclic nucleotide-binding domain; it reads AGLLVELVLK…EEKGRQILMK (121 aa). Residues glycine 489, glutamate 490, serine 492, arginine 505, threonine 506, and aspartate 550 each coordinate 3',5'-cyclic GMP. A coiled-coil region spans residues 567 to 610; that stretch reads VEEKVEYLESSLDILQTRFARLLAEYSASQMKLKQRLTRLESQM.

This sequence belongs to the cyclic nucleotide-gated cation channel (TC 1.A.1.5) family. CNGA3 subfamily. As to quaternary structure, forms heterotetrameric channels composed of CNGA3 and CNGB3 subunits with 3:1 stoichiometry. Prominently expressed in retina.

The protein resides in the cell membrane. It catalyses the reaction Ca(2+)(in) = Ca(2+)(out). It carries out the reaction Na(+)(in) = Na(+)(out). The catalysed reaction is K(+)(in) = K(+)(out). The enzyme catalyses NH4(+)(in) = NH4(+)(out). It catalyses the reaction Rb(+)(in) = Rb(+)(out). It carries out the reaction Li(+)(in) = Li(+)(out). The catalysed reaction is Cs(+)(in) = Cs(+)(out). Its function is as follows. Pore-forming subunit of the cone cyclic nucleotide-gated channel. Mediates cone photoresponses at bright light converting transient changes in intracellular cGMP levels into electrical signals. In the dark, cGMP levels are high and keep the channel open enabling a steady inward current carried by Na(+) and Ca(2+) ions that leads to membrane depolarization and neurotransmitter release from synaptic terminals. Upon photon absorption cGMP levels decline leading to channel closure and membrane hyperpolarization that ultimately slows neurotransmitter release and signals the presence of light, the end point of the phototransduction cascade. Pore-forming subunit of the gustatory cyclic nucleotide-gated channel. In the taste buds, may sense oral extracellular pH and conduct ion currents that modulate the excitability of taste cells. Conducts cGMP- and cAMP-gated ion currents, with permeability for monovalent and divalent cations. The sequence is that of Cyclic nucleotide-gated channel alpha-3 from Mus musculus (Mouse).